Consider the following 453-residue polypeptide: ATP-dependent protease ATPase subunit HslU (453 aa).

ATP-binding positions include Ile-18, 60–65 (GVGKTE), Asp-266, Glu-331, and Arg-403.

The protein belongs to the ClpX chaperone family. HslU subfamily. A double ring-shaped homohexamer of HslV is capped on each side by a ring-shaped HslU homohexamer. The assembly of the HslU/HslV complex is dependent on binding of ATP.

It localises to the cytoplasm. ATPase subunit of a proteasome-like degradation complex; this subunit has chaperone activity. The binding of ATP and its subsequent hydrolysis by HslU are essential for unfolding of protein substrates subsequently hydrolyzed by HslV. HslU recognizes the N-terminal part of its protein substrates and unfolds these before they are guided to HslV for hydrolysis. This Desulforapulum autotrophicum (strain ATCC 43914 / DSM 3382 / VKM B-1955 / HRM2) (Desulfobacterium autotrophicum) protein is ATP-dependent protease ATPase subunit HslU.